A 176-amino-acid chain; its full sequence is Ribosome rescue factor SmrB (176 aa).

Residues 93 to 168 form the Smr domain; it reads LDLHGYRQSE…GDAALLVLID (76 aa).

Belongs to the SmrB family. In terms of assembly, associates with collided ribosomes, but not with correctly translating polysomes.

Its function is as follows. Acts as a ribosome collision sensor. Detects stalled/collided disomes (pairs of ribosomes where the leading ribosome is stalled and a second ribosome has collided with it) and endonucleolytically cleaves mRNA at the 5' boundary of the stalled ribosome. Stalled/collided disomes form a new interface (primarily via the 30S subunits) that binds SmrB. Cleaved mRNA becomes available for tmRNA ligation, leading to ribosomal subunit dissociation and rescue of stalled ribosomes. The protein is Ribosome rescue factor SmrB of Shewanella oneidensis (strain ATCC 700550 / JCM 31522 / CIP 106686 / LMG 19005 / NCIMB 14063 / MR-1).